Here is a 377-residue protein sequence, read N- to C-terminus: Guanine nucleotide-binding protein subunit alpha-13 (377 aa).

Residues C14 and C18 are each lipidated (S-palmitoyl cysteine). The 331-residue stretch at 47–377 (RLVKILLLGA…HDNLKQLMLQ (331 aa)) folds into the G-alpha domain. Residues 50–63 (KILLLGAGESGKST) form a G1 motif region. Residues 58 to 63 (ESGKST), S173, and 197 to 200 (LLAR) contribute to the GTP site. S62 contacts Mg(2+). Residues 195 to 203 (DILLARRPT) form a G2 motif region. T203 is a binding site for Mg(2+). At T203 the chain carries Phosphothreonine; by PKA. The G3 motif stretch occupies residues 218 to 227 (FKMVDVGGQR). Residues 287 to 294 (ILFLNKTD) are G4 motif. Residues 291-294 (NKTD) and A349 contribute to the GTP site. Residues 347-352 (TTAINT) form a G5 motif region.

This sequence belongs to the G-alpha family. G(12) subfamily. In terms of assembly, g proteins are composed of 3 units; alpha, beta and gamma. The alpha chain contains the guanine nucleotide binding site. Interacts with UBXD5. Interacts with HAX1. Interacts (in GTP-bound form) with PPP5C (via TPR repeats); activates PPP5C phosphatase activity and translocates PPP5C to the cell membrane. Interacts with RGS22. Interacts (in GTP-bound form) with ARHGEF1. Interacts (in GTP-bound form) with ARHGEF11 (via RGS domain). Interacts (in GTP-bound form) with ARHGEF12 (via RGS domain). Interacts with CTNND1. Interacts with GASL2L2. Interacts with GPR35. Interacts with GPR174. Palmitoylation is critical for proper membrane localization and signaling. Post-translationally, phosphorylation on Thr-203 by PKA destabilizes the heterotrimer of alpha, beta and gamma, and inhibits Rho activation. In terms of tissue distribution, expressed in testis, including in Leydig cells and in the seminiferous epithelium, in differentiating cells from the spermatogonia to mature spermatozoa stages and round spermatids (at protein level). Expressed in 99.2% of spermatozoa from healthy individuals, but only in 28.6% of macrocephalic spermatozoa from infertile patients (at protein level).

The protein localises to the cell membrane. It is found in the melanosome. It localises to the cytoplasm. The protein resides in the nucleus. In terms of biological role, guanine nucleotide-binding proteins (G proteins) are involved as modulators or transducers in various transmembrane signaling systems. Activates effector molecule RhoA by binding and activating RhoGEFs (ARHGEF1/p115RhoGEF, ARHGEF11/PDZ-RhoGEF and ARHGEF12/LARG). GNA13-dependent Rho signaling subsequently regulates transcription factor AP-1 (activating protein-1). Promotes tumor cell invasion and metastasis by activating RhoA/ROCK signaling pathway. Inhibits CDH1-mediated cell adhesion in a process independent from Rho activation. In lymphoid follicles, transmits P2RY8- and S1PR2-dependent signals that lead to inhibition of germinal center (GC) B cell growth and migration outside the GC niche. The chain is Guanine nucleotide-binding protein subunit alpha-13 (GNA13) from Homo sapiens (Human).